A 102-amino-acid polypeptide reads, in one-letter code: MAGQAFRKFLPLFDRVLVERSAAETVTKGGIMLPEKSQGKVLQATVVAVGSGGKGKGGEIQPVSVKVGDKVLLPEYGGTKVVLDDKDYFLFRDGDILGKYVD.

At A2 the chain carries N-acetylalanine. N6-acetyllysine is present on K8. Residue K28 is modified to N6-succinyllysine. N6-acetyllysine; alternate is present on K40. An N6-malonyllysine; alternate mark is found at K40, K54, and K56. K40, K54, K56, K66, and K70 each carry N6-succinyllysine; alternate. N6-acetyllysine; alternate occurs at positions 56, 66, and 70. T79 carries the post-translational modification Phosphothreonine. N6-acetyllysine; alternate is present on residues K80 and K86. N6-succinyllysine; alternate occurs at positions 80 and 86. N6-acetyllysine is present on K99.

This sequence belongs to the GroES chaperonin family. In terms of assembly, homoheptamer arranged in a ring structure. 2 heptameric Hsp10 rings interact with a Hsp60 tetradecamer in the structure of a back-to-back double heptameric ring to form the symmetrical football complex.

Its subcellular location is the mitochondrion matrix. In terms of biological role, co-chaperonin implicated in mitochondrial protein import and macromolecular assembly. Together with Hsp60, facilitates the correct folding of imported proteins. May also prevent misfolding and promote the refolding and proper assembly of unfolded polypeptides generated under stress conditions in the mitochondrial matrix. The functional units of these chaperonins consist of heptameric rings of the large subunit Hsp60, which function as a back-to-back double ring. In a cyclic reaction, Hsp60 ring complexes bind one unfolded substrate protein per ring, followed by the binding of ATP and association with 2 heptameric rings of the co-chaperonin Hsp10. This leads to sequestration of the substrate protein in the inner cavity of Hsp60 where, for a certain period of time, it can fold undisturbed by other cell components. Synchronous hydrolysis of ATP in all Hsp60 subunits results in the dissociation of the chaperonin rings and the release of ADP and the folded substrate protein. This chain is 10 kDa heat shock protein, mitochondrial (Hspe1), found in Rattus norvegicus (Rat).